Reading from the N-terminus, the 224-residue chain is Large ribosomal subunit protein bL25 (224 aa).

The tract at residues Glu-190–Lys-224 is disordered.

Belongs to the bacterial ribosomal protein bL25 family. CTC subfamily. As to quaternary structure, part of the 50S ribosomal subunit; part of the 5S rRNA/L5/L18/L25 subcomplex. Contacts the 5S rRNA. Binds to the 5S rRNA independently of L5 and L18.

In terms of biological role, this is one of the proteins that binds to the 5S RNA in the ribosome where it forms part of the central protuberance. In Variovorax paradoxus (strain S110), this protein is Large ribosomal subunit protein bL25.